The sequence spans 375 residues: Ribosomal RNA large subunit methyltransferase F (375 aa).

2 disordered regions span residues 1–39 (MKNN…AAVK) and 262–281 (NQRK…GKPT). Over residues 27–38 (AKPKRVKKKAAV) the composition is skewed to basic residues.

It belongs to the methyltransferase superfamily. METTL16/RlmF family.

The protein resides in the cytoplasm. The enzyme catalyses adenosine(1618) in 23S rRNA + S-adenosyl-L-methionine = N(6)-methyladenosine(1618) in 23S rRNA + S-adenosyl-L-homocysteine + H(+). Functionally, specifically methylates the adenine in position 1618 of 23S rRNA. This is Ribosomal RNA large subunit methyltransferase F from Vibrio parahaemolyticus serotype O3:K6 (strain RIMD 2210633).